The chain runs to 236 residues: Phosphoglycolate phosphatase (236 aa).

The active-site Nucleophile is the Asp23. Asp23 and Asp25 together coordinate Mg(2+). Position 162 (Lys162) interacts with substrate. Residues Asp185 and Asp189 each contribute to the Mg(2+) site.

It belongs to the archaeal SPP-like hydrolase family. Mg(2+) is required as a cofactor.

The catalysed reaction is 2-phosphoglycolate + H2O = glycolate + phosphate. Its function is as follows. Catalyzes the dephosphorylation of 2-phosphoglycolate. The chain is Phosphoglycolate phosphatase from Picrophilus torridus (strain ATCC 700027 / DSM 9790 / JCM 10055 / NBRC 100828 / KAW 2/3).